The sequence spans 89 residues: Meiosis expressed gene 1 protein homolog (89 aa).

It belongs to the MEIG1 family.

The protein is Meiosis expressed gene 1 protein homolog of Nematostella vectensis (Starlet sea anemone).